The primary structure comprises 228 residues: Cytochrome b5 domain-containing protein 1 (228 aa).

Residues 17–83 (RRYFTPAEVA…DPKTRDIRKH (67 aa)) enclose the Cytochrome b5 heme-binding domain. Residues Tyr-52 and His-83 each contribute to the heme site.

This sequence belongs to the cytochrome b5 family.

Its subcellular location is the cytoplasm. The protein resides in the cytoskeleton. It localises to the cilium axoneme. Functionally, radial spoke stalk protein that binds heme under oxidizing conditions. Required for the coordinated beating of multiple cilia maybe by functioning in a redox signaling pathway. The sequence is that of Cytochrome b5 domain-containing protein 1 from Homo sapiens (Human).